Reading from the N-terminus, the 448-residue chain is Trk system potassium uptake protein TrkA homolog 1 (448 aa).

Residues 1–124 enclose the RCK N-terminal 1 domain; sequence MKAVIIGAGE…RAQVGVDLMI (124 aa). Residues 7 to 11, Asp29, 70 to 71, and Arg101 contribute to the NAD(+) site; these read GAGEV and TG. Residues 144–225 form the RCK C-terminal 1 domain; that stretch reads IDAEMFAEGK…MEDLESVFGS (82 aa). An RCK N-terminal 2 domain is found at 230–348; the sequence is RTRILLIGCG…FEMVGIDMAV (119 aa). 232–262 provides a ligand contact to NAD(+); that stretch reads RILLIGCGIVGMYLAKLIDKEENADLRIIEH. Residues 368 to 448 form the RCK C-terminal 2 domain; sequence QTLTTIEGER…AASEVEKYFK (81 aa).

Its function is as follows. Part of a potassium transport system. The sequence is that of Trk system potassium uptake protein TrkA homolog 1 (trkA1) from Methanosarcina mazei (strain ATCC BAA-159 / DSM 3647 / Goe1 / Go1 / JCM 11833 / OCM 88) (Methanosarcina frisia).